The primary structure comprises 378 residues: Actin-related protein 2/3 complex subunit 1B (378 aa).

WD repeat units lie at residues 8 to 47, 53 to 92, 97 to 138, 143 to 182, 203 to 242, 257 to 295, and 331 to 375; these read RFAESITCHAWSPDLSMVALCPNNTEVHIYKSLSQDHWER, KHDQIVSGIDWSSKSNKIVTVSHDRNSYVWSLEGAEWVPT, RLNR…WVSK, RHESSVTSVAWHPNNVLLATTSTDGKCRVFSTFIKGVDTK, LSYSWAFGVKWSPSGNTLAYVGHSSMIYFVDDVGPSPLAQ, ISEKMVIGVGYDSNPMVFAADDTGIWSFIRYIGEKKAAS, and VHDN…QELG. Positions 319 to 340 are disordered; sequence TTANDASDSRGGVHDNSITSIV.

This sequence belongs to the WD repeat ARPC1 family. In terms of assembly, component of the Arp2/3 complex composed of ARP2, ARP3, ARPC1/p41-ARC, ARPC2/p34-ARC, ARPC3/p21-ARC, ARPC4/p20-ARC and ARPC5/p16-ARC. As to expression, expressed at low levels in all tissues with a relatively highest expression in inflorescences.

The protein localises to the cytoplasm. The protein resides in the cytoskeleton. Functions as a component of the Arp2/3 complex which is involved in regulation of actin polymerization and together with an activating nucleation-promoting factor (NPF) mediates the formation of branched actin networks. Arp2/3 complex plays a critical role in the control of cell morphogenesis via the modulation of cell polarity development. The polypeptide is Actin-related protein 2/3 complex subunit 1B (ARPC1B) (Arabidopsis thaliana (Mouse-ear cress)).